A 264-amino-acid polypeptide reads, in one-letter code: S-adenosylmethionine decarboxylase proenzyme (264 aa).

Serine 112 functions as the Schiff-base intermediate with substrate; via pyruvic acid in the catalytic mechanism. Serine 112 carries the pyruvic acid (Ser); by autocatalysis modification. The active-site Proton acceptor; for processing activity is histidine 117. Cysteine 140 (proton donor; for catalytic activity) is an active-site residue.

The protein belongs to the prokaryotic AdoMetDC family. Type 2 subfamily. In terms of assembly, heterooctamer of four alpha and four beta chains arranged as a tetramer of alpha/beta heterodimers. The cofactor is pyruvate. Is synthesized initially as an inactive proenzyme. Formation of the active enzyme involves a self-maturation process in which the active site pyruvoyl group is generated from an internal serine residue via an autocatalytic post-translational modification. Two non-identical subunits are generated from the proenzyme in this reaction, and the pyruvate is formed at the N-terminus of the alpha chain, which is derived from the carboxyl end of the proenzyme. The post-translation cleavage follows an unusual pathway, termed non-hydrolytic serinolysis, in which the side chain hydroxyl group of the serine supplies its oxygen atom to form the C-terminus of the beta chain, while the remainder of the serine residue undergoes an oxidative deamination to produce ammonia and the pyruvoyl group blocking the N-terminus of the alpha chain.

The enzyme catalyses S-adenosyl-L-methionine + H(+) = S-adenosyl 3-(methylsulfanyl)propylamine + CO2. It functions in the pathway amine and polyamine biosynthesis; S-adenosylmethioninamine biosynthesis; S-adenosylmethioninamine from S-adenosyl-L-methionine: step 1/1. Its function is as follows. Catalyzes the decarboxylation of S-adenosylmethionine to S-adenosylmethioninamine (dcAdoMet), the propylamine donor required for the synthesis of the polyamines spermine and spermidine from the diamine putrescine. This is S-adenosylmethionine decarboxylase proenzyme from Hamiltonella defensa subsp. Acyrthosiphon pisum (strain 5AT).